The following is a 208-amino-acid chain: uncharacterized protein (208 aa).

It to E.coli YfjJ.

This is an uncharacterized protein from Escherichia coli (strain K12).